Here is a 247-residue protein sequence, read N- to C-terminus: Probable transcriptional regulatory protein plu2109 (247 aa).

The protein belongs to the TACO1 family.

It is found in the cytoplasm. The chain is Probable transcriptional regulatory protein plu2109 from Photorhabdus laumondii subsp. laumondii (strain DSM 15139 / CIP 105565 / TT01) (Photorhabdus luminescens subsp. laumondii).